Consider the following 1992-residue polypeptide: E3 ubiquitin-protein ligase TRIP12 (1992 aa).

Residues 1-10 (MSNRPNNNPG) show a composition bias toward polar residues. 3 disordered regions span residues 1 to 398 (MSNR…DDSE), 797 to 817 (QRKPNPLANSNTSGYSESKKD), and 938 to 1080 (SLLT…ASKD). N-acetylserine is present on S2. The residue at position 12 (S12) is a Phosphoserine. The span at 18-27 (RNTAGAQPQD) shows a compositional bias: polar residues. Residues 48 to 70 (DPDRANTSERQKTGQVPKKDNSR) show a composition bias toward basic and acidic residues. Phosphoserine is present on residues S77, S85, and S100. Polar residues predominate over residues 78 to 88 (PDYNRTNSPSS). The segment covering 119-132 (EQQLKSAQSPSTSK) has biased composition (polar residues). Low complexity-rich tracts occupy residues 154 to 166 (SSCVKSGSGSEST) and 175 to 216 (PTKL…SSTV). An N6-acetyllysine modification is found at K181. The span at 280–290 (PGSSKSETSKP) shows a compositional bias: polar residues. 2 positions are modified to phosphoserine: S310 and S312. Polar residues predominate over residues 326–338 (QKTTGSCASTSRR). Basic and acidic residues predominate over residues 346-358 (GAAEARRQEKMAD). 2 stretches are compositionally biased toward polar residues: residues 360-371 (ESNQEAVNSSAA) and 803-812 (LANSNTSGYS). A WWE domain is found at 749–836 (MLKKGNAQNT…DPELAKSFIK (88 aa)). S942 carries the post-translational modification Phosphoserine. Positions 948 to 973 (TNGSGSMGSTTSVSSGTATAATHAAA) are enriched in low complexity. 2 positions are modified to phosphoserine: S991 and S997. The segment covering 1001 to 1014 (KRKRLPKRGPRRPK) has biased composition (basic residues). A Phosphoserine modification is found at S1016. Residues 1017-1026 (PPRDDDKVDN) show a composition bias toward basic and acidic residues. A compositionally biased stretch (low complexity) spans 1029 to 1040 (KSPTTTQSPKSS). S1030 bears the Phosphoserine mark. A compositionally biased stretch (polar residues) spans 1041-1062 (FLASLNPKTWGRLSTQSNSNNI). S1317, S1322, S1329, and S1376 each carry phosphoserine. At T1377 the chain carries Phosphothreonine. Disordered regions lie at residues 1407-1433 (SNKDCVGGKRGRAQTAPTKTSPRNAKK) and 1568-1587 (TNPEINQSDSQDSRVAPRLD). K1425 is subject to N6-acetyllysine. The residue at position 1427 (S1427) is a Phosphoserine. The tract at residues 1496–1570 (EIIPTSEFIN…AMQRLLDTNP (75 aa)) is K-box. One can recognise an HECT domain in the interval 1885–1992 (PDHGYTHDSR…REGQQSFHLS (108 aa)). C1959 (glycyl thioester intermediate) is an active-site residue.

Belongs to the UPL family. K-HECT subfamily. In terms of assembly, interacts with MYC; leading to disrupt interaction with isoform p19ARF/ARF of CDKN2A. Interacts with TRADD; leading to disrupt interaction with isoform p19ARF/ARF of CDKN2A. Interacts with SMARCC1; leading to disrupt interaction with SMARCE1.

It is found in the nucleus. The protein localises to the nucleoplasm. It carries out the reaction S-ubiquitinyl-[E2 ubiquitin-conjugating enzyme]-L-cysteine + [acceptor protein]-L-lysine = [E2 ubiquitin-conjugating enzyme]-L-cysteine + N(6)-ubiquitinyl-[acceptor protein]-L-lysine.. It functions in the pathway protein modification; protein ubiquitination. Its function is as follows. E3 ubiquitin-protein ligase involved in ubiquitin fusion degradation (UFD) pathway and regulation of DNA repair. Part of the ubiquitin fusion degradation (UFD) pathway, a process that mediates ubiquitination of protein at their N-terminus, regardless of the presence of lysine residues in target proteins. Acts as a key regulator of DNA damage response by acting as a suppressor of RNF168, an E3 ubiquitin-protein ligase that promotes accumulation of 'Lys-63'-linked histone H2A and H2AX at DNA damage sites, thereby acting as a guard against excessive spreading of ubiquitinated chromatin at damaged chromosomes. In normal cells, mediates ubiquitination and degradation of isoform p19ARF/ARF of CDKN2A, a lysine-less tumor suppressor required for p53/TP53 activation under oncogenic stress. In cancer cells, however, isoform p19ARF/ARF and TRIP12 are located in different cell compartments, preventing isoform p19ARF/ARF ubiquitination and degradation. Does not mediate ubiquitination of isoform p16-INK4a of CDKN2A. Also catalyzes ubiquitination of NAE1 and SMARCE1, leading to their degradation. Ubiquitination and degradation of target proteins is regulated by interaction with proteins such as MYC, TRADD or SMARCC1, which disrupt the interaction between TRIP12 and target proteins. Mediates ubiquitination of ASXL1: following binding to N(6)-methyladenosine methylated DNA, ASXL1 is ubiquitinated by TRIP12, leading to its degradation and subsequent inactivation of the PR-DUB complex. In Homo sapiens (Human), this protein is E3 ubiquitin-protein ligase TRIP12 (TRIP12).